The sequence spans 153 residues: D-aminoacyl-tRNA deacylase (153 aa).

A Gly-cisPro motif, important for rejection of L-amino acids motif is present at residues 142–143; it reads GP.

It belongs to the DTD family. Homodimer.

It localises to the cytoplasm. It catalyses the reaction glycyl-tRNA(Ala) + H2O = tRNA(Ala) + glycine + H(+). The catalysed reaction is a D-aminoacyl-tRNA + H2O = a tRNA + a D-alpha-amino acid + H(+). An aminoacyl-tRNA editing enzyme that deacylates mischarged D-aminoacyl-tRNAs. Also deacylates mischarged glycyl-tRNA(Ala), protecting cells against glycine mischarging by AlaRS. Acts via tRNA-based rather than protein-based catalysis; rejects L-amino acids rather than detecting D-amino acids in the active site. By recycling D-aminoacyl-tRNA to D-amino acids and free tRNA molecules, this enzyme counteracts the toxicity associated with the formation of D-aminoacyl-tRNA entities in vivo and helps enforce protein L-homochirality. This Cupriavidus taiwanensis (strain DSM 17343 / BCRC 17206 / CCUG 44338 / CIP 107171 / LMG 19424 / R1) (Ralstonia taiwanensis (strain LMG 19424)) protein is D-aminoacyl-tRNA deacylase.